Consider the following 272-residue polypeptide: Phosphatidylglycerol--prolipoprotein diacylglyceryl transferase (272 aa).

A run of 4 helical transmembrane segments spans residues 15-35 (LGPL…LVLF), 53-73 (AFAV…WHVV), 90-110 (IWEG…CFFV), and 117-137 (VPPF…LCFA). Arginine 138 is an a 1,2-diacyl-sn-glycero-3-phospho-(1'-sn-glycerol) binding site. A run of 3 helical transmembrane segments spans residues 174–194 (FHPI…ILLV), 199–219 (VFVK…VLYG), and 237–257 (FGLD…VLIA).

The protein belongs to the Lgt family.

The protein resides in the cell membrane. It carries out the reaction L-cysteinyl-[prolipoprotein] + a 1,2-diacyl-sn-glycero-3-phospho-(1'-sn-glycerol) = an S-1,2-diacyl-sn-glyceryl-L-cysteinyl-[prolipoprotein] + sn-glycerol 1-phosphate + H(+). The protein operates within protein modification; lipoprotein biosynthesis (diacylglyceryl transfer). Functionally, catalyzes the transfer of the diacylglyceryl group from phosphatidylglycerol to the sulfhydryl group of the N-terminal cysteine of a prolipoprotein, the first step in the formation of mature lipoproteins. The polypeptide is Phosphatidylglycerol--prolipoprotein diacylglyceryl transferase (Tropheryma whipplei (strain Twist) (Whipple's bacillus)).